The primary structure comprises 157 residues: Crossover junction endodeoxyribonuclease RuvC (157 aa).

Catalysis depends on residues Asp-7, Glu-66, and Asp-139. 3 residues coordinate Mg(2+): Asp-7, Glu-66, and Asp-139.

The protein belongs to the RuvC family. Homodimer which binds Holliday junction (HJ) DNA. The HJ becomes 2-fold symmetrical on binding to RuvC with unstacked arms; it has a different conformation from HJ DNA in complex with RuvA. In the full resolvosome a probable DNA-RuvA(4)-RuvB(12)-RuvC(2) complex forms which resolves the HJ. The cofactor is Mg(2+).

Its subcellular location is the cytoplasm. It catalyses the reaction Endonucleolytic cleavage at a junction such as a reciprocal single-stranded crossover between two homologous DNA duplexes (Holliday junction).. Its function is as follows. The RuvA-RuvB-RuvC complex processes Holliday junction (HJ) DNA during genetic recombination and DNA repair. Endonuclease that resolves HJ intermediates. Cleaves cruciform DNA by making single-stranded nicks across the HJ at symmetrical positions within the homologous arms, yielding a 5'-phosphate and a 3'-hydroxyl group; requires a central core of homology in the junction. The consensus cleavage sequence is 5'-(A/T)TT(C/G)-3'. Cleavage occurs on the 3'-side of the TT dinucleotide at the point of strand exchange. HJ branch migration catalyzed by RuvA-RuvB allows RuvC to scan DNA until it finds its consensus sequence, where it cleaves and resolves the cruciform DNA. In Campylobacter concisus (strain 13826), this protein is Crossover junction endodeoxyribonuclease RuvC.